The chain runs to 154 residues: 3-hydroxyacyl-[acyl-carrier-protein] dehydratase FabZ (154 aa).

The active site involves histidine 57.

This sequence belongs to the thioester dehydratase family. FabZ subfamily.

The protein resides in the cytoplasm. The catalysed reaction is a (3R)-hydroxyacyl-[ACP] = a (2E)-enoyl-[ACP] + H2O. Functionally, involved in unsaturated fatty acids biosynthesis. Catalyzes the dehydration of short chain beta-hydroxyacyl-ACPs and long chain saturated and unsaturated beta-hydroxyacyl-ACPs. This chain is 3-hydroxyacyl-[acyl-carrier-protein] dehydratase FabZ, found in Sinorhizobium fredii (strain NBRC 101917 / NGR234).